Reading from the N-terminus, the 182-residue chain is MNKLSTKLVVAIGIGAALYGILGLWGFSIAPNTFIKPALAILTIFGALFGPVAGLLIGLIGHTVTDTIAGWGIWWGWVFSSGIIGFAMGLIQKRVGFSVKNGTYNKGDISYLAITGLIGIVIAIIFAGAFDIIVMGEPFDKIVIQVLGATIADVIVFLVLGLPITIGLAKSNKKHTHLKIEK.

5 helical membrane passes run 9 to 29 (VVAIGIGAALYGILGLWGFSI), 40 to 60 (AILTIFGALFGPVAGLLIGLI), 71 to 91 (WGIWWGWVFSSGIIGFAMGLI), 114 to 134 (ITGLIGIVIAIIFAGAFDIIV), and 142 to 162 (IVIQVLGATIADVIVFLVLGL).

It belongs to the UPF0397 family.

Its subcellular location is the cell membrane. The chain is UPF0397 protein BCE_2667 from Bacillus cereus (strain ATCC 10987 / NRS 248).